Reading from the N-terminus, the 266-residue chain is Tryptophan synthase alpha chain (266 aa).

Active-site proton acceptor residues include E49 and D60.

This sequence belongs to the TrpA family. As to quaternary structure, tetramer of two alpha and two beta chains.

The catalysed reaction is (1S,2R)-1-C-(indol-3-yl)glycerol 3-phosphate + L-serine = D-glyceraldehyde 3-phosphate + L-tryptophan + H2O. It functions in the pathway amino-acid biosynthesis; L-tryptophan biosynthesis; L-tryptophan from chorismate: step 5/5. Functionally, the alpha subunit is responsible for the aldol cleavage of indoleglycerol phosphate to indole and glyceraldehyde 3-phosphate. The sequence is that of Tryptophan synthase alpha chain from Thioalkalivibrio sulfidiphilus (strain HL-EbGR7).